Reading from the N-terminus, the 267-residue chain is Phosphonoacetaldehyde hydrolase (267 aa).

Catalysis depends on aspartate 10, which acts as the Nucleophile. Mg(2+) is bound by residues aspartate 10 and alanine 12. The Schiff-base intermediate with substrate role is filled by lysine 51. Aspartate 184 contributes to the Mg(2+) binding site.

It belongs to the HAD-like hydrolase superfamily. PhnX family. As to quaternary structure, homodimer. It depends on Mg(2+) as a cofactor.

It catalyses the reaction phosphonoacetaldehyde + H2O = acetaldehyde + phosphate + H(+). Functionally, involved in phosphonate degradation. The polypeptide is Phosphonoacetaldehyde hydrolase (Paraburkholderia phytofirmans (strain DSM 17436 / LMG 22146 / PsJN) (Burkholderia phytofirmans)).